Reading from the N-terminus, the 717-residue chain is Delta-1-pyrroline-5-carboxylate synthase (717 aa).

A glutamate 5-kinase region spans residues 1 to 296; the sequence is METVDSTRAF…WASIGETDAR (296 aa). Serine 60, aspartate 157, and asparagine 176 together coordinate substrate. ATP is bound by residues 196–197 and 236–242; these read SD and RGGMTAK. Residues 297–717 form a gamma-glutamyl phosphate reductase region; sequence EMAVAARACS…YSHKDLTQQG (421 aa).

This sequence in the N-terminal section; belongs to the glutamate 5-kinase family. The protein in the C-terminal section; belongs to the gamma-glutamyl phosphate reductase family. Expressed at high levels in leaves and is inducible in roots subjected to salt stress.

The enzyme catalyses L-glutamate + ATP = L-glutamyl 5-phosphate + ADP. It carries out the reaction L-glutamate 5-semialdehyde + phosphate + NADP(+) = L-glutamyl 5-phosphate + NADPH + H(+). The protein operates within amino-acid biosynthesis; L-proline biosynthesis; L-glutamate 5-semialdehyde from L-glutamate: step 1/2. It participates in amino-acid biosynthesis; L-proline biosynthesis; L-glutamate 5-semialdehyde from L-glutamate: step 2/2. Feedback regulated by proline. Functionally, P5CS plays a key role in proline biosynthesis, leading to osmoregulation in plants. The sequence is that of Delta-1-pyrroline-5-carboxylate synthase (PRO2) from Solanum lycopersicum (Tomato).